The sequence spans 315 residues: DNA-directed RNA polymerase subunit alpha (315 aa).

Residues 1 to 229 (MLDSKLKAPV…EHLTYFSNPQ (229 aa)) form an alpha N-terminal domain (alpha-NTD) region. The interval 247-315 (EQEEELDLPL…LEKKGFTLKE (69 aa)) is alpha C-terminal domain (alpha-CTD).

The protein belongs to the RNA polymerase alpha chain family. As to quaternary structure, homodimer. The RNAP catalytic core consists of 2 alpha, 1 beta, 1 beta' and 1 omega subunit. When a sigma factor is associated with the core the holoenzyme is formed, which can initiate transcription.

It catalyses the reaction RNA(n) + a ribonucleoside 5'-triphosphate = RNA(n+1) + diphosphate. In terms of biological role, DNA-dependent RNA polymerase catalyzes the transcription of DNA into RNA using the four ribonucleoside triphosphates as substrates. This chain is DNA-directed RNA polymerase subunit alpha, found in Thermus thermophilus (strain ATCC BAA-163 / DSM 7039 / HB27).